Here is a 203-residue protein sequence, read N- to C-terminus: Putative 3-methyladenine DNA glycosylase (203 aa).

The protein belongs to the DNA glycosylase MPG family.

The protein is Putative 3-methyladenine DNA glycosylase of Clostridium botulinum (strain Loch Maree / Type A3).